Here is a 121-residue protein sequence, read N- to C-terminus: Chromosome transmission fidelity protein 8 homolog (121 aa).

It belongs to the CTF8 family. As to quaternary structure, component of the CTF18-RFC complex, which consists of CTF18, CTF8, DSCC1, RFC2, RFC3, RFC4 and RFC5. The CTF18-RFC complex does not interact with the Rad9/Rad1/Hus1 complex. The CTF18-RFC complex interacts with POLH. CTF18/CTF8/DSCC1 associate with PCNA. CTF8 exists as a dimer with DSCC1.

The protein resides in the nucleus. In terms of biological role, chromosome cohesion factor involved in sister chromatid cohesion and fidelity of chromosome transmission. Component of one of the cell nuclear antigen loader complexes, CTF18-replication factor C (CTF18-RFC), which consists of CTF18, CTF8, DSCC1, RFC2, RFC3, RFC4 and RFC5. The CTF18-RFC complex binds to single-stranded and primed DNAs and has weak ATPase activity that is stimulated the presence of primed DNA, replication protein A (RPA) and proliferating cell nuclear antigen (PCNA). The CTF18-RFC complex catalyzes the ATP-dependent loading of PCNA onto primed and gapped DNA. It also interacts with and stimulates POLH, which is suggestive of a protein network that coordinates DNA repair, recombination and chromosome cohesion reactions with replication fork progression. The polypeptide is Chromosome transmission fidelity protein 8 homolog (Rattus norvegicus (Rat)).